Consider the following 101-residue polypeptide: Isochorismate pyruvate lyase (101 aa).

The region spanning Pro-4–Trp-94 is the Chorismate mutase domain. Substrate-binding residues include Arg-14, Arg-31, Lys-42, and Gln-90.

Dimer of dimers.

The catalysed reaction is isochorismate = salicylate + pyruvate. It carries out the reaction chorismate = prephenate. It functions in the pathway siderophore biosynthesis; salicylate biosynthesis. Its activity is regulated as follows. Inhibited by endo-oxabicyclic diacid resembling to the conformation of the transition state. Involved in the incorporation of salicylate into the siderophore pyochelin. Catalyzes the elimination of the enolpyruvyl side chain from isochorismate to yield salicylate and pyruvate via a rare pericyclic hydrogen transfer mechanism from C2 to C5. PchB also catalyzes the nonphysiological Claisen rearrangement of chorismate to prephenate in which the pyruvylenol tail is transferred from a C3 ether linkage to a C1-C9 linkage. The polypeptide is Isochorismate pyruvate lyase (Pseudomonas aeruginosa (strain ATCC 15692 / DSM 22644 / CIP 104116 / JCM 14847 / LMG 12228 / 1C / PRS 101 / PAO1)).